The chain runs to 230 residues: Cytidylate kinase (230 aa).

An ATP-binding site is contributed by 13-21; sequence GPAGTGKSS.

This sequence belongs to the cytidylate kinase family. Type 1 subfamily.

It localises to the cytoplasm. The enzyme catalyses CMP + ATP = CDP + ADP. The catalysed reaction is dCMP + ATP = dCDP + ADP. This chain is Cytidylate kinase, found in Mycobacterium tuberculosis (strain ATCC 25177 / H37Ra).